A 465-amino-acid chain; its full sequence is GTPase Der (465 aa).

EngA-type G domains lie at 3-166 (FLVA…LNEY) and 184-358 (IHFS…ACAN). GTP is bound by residues 9-16 (GRANVGKS), 56-60 (DTGGI), 118-121 (NKVD), 190-197 (GRPNVGKS), 237-241 (DTAGV), and 302-305 (NKWD). One can recognise a KH-like domain in the interval 359-443 (KKITTADATR…PIVFEFKQSE (85 aa)). The disordered stretch occupies residues 446 to 465 (FADRKNKRSKDEGSKSKKVK).

It belongs to the TRAFAC class TrmE-Era-EngA-EngB-Septin-like GTPase superfamily. EngA (Der) GTPase family. In terms of assembly, associates with the 50S ribosomal subunit.

In terms of biological role, GTPase that plays an essential role in the late steps of ribosome biogenesis. This is GTPase Der from Francisella tularensis subsp. novicida (strain U112).